The sequence spans 508 residues: Photosystem II CP47 reaction center protein (508 aa).

Transmembrane regions (helical) follow at residues 21–36 (AVHIMHTALVAGWAGS), 101–115 (IVFSGLCFLSAIWHW), 140–156 (GIHLFLSGVACFGFGAF), 203–218 (IAAGLLGIIAGLFHLS), 237–252 (VLSSSIAAVFFAAFIV), and 457–472 (TFALLFFFGHIWHGAR).

The protein belongs to the PsbB/PsbC family. PsbB subfamily. PSII is composed of 1 copy each of membrane proteins PsbA, PsbB, PsbC, PsbD, PsbE, PsbF, PsbH, PsbI, PsbJ, PsbK, PsbL, PsbM, PsbT, PsbX, PsbY, PsbZ, Psb30/Ycf12, at least 3 peripheral proteins of the oxygen-evolving complex and a large number of cofactors. It forms dimeric complexes. Requires Binds multiple chlorophylls. PSII binds additional chlorophylls, carotenoids and specific lipids. as cofactor.

The protein resides in the plastid. The protein localises to the chloroplast thylakoid membrane. One of the components of the core complex of photosystem II (PSII). It binds chlorophyll and helps catalyze the primary light-induced photochemical processes of PSII. PSII is a light-driven water:plastoquinone oxidoreductase, using light energy to abstract electrons from H(2)O, generating O(2) and a proton gradient subsequently used for ATP formation. The protein is Photosystem II CP47 reaction center protein of Gnetum parvifolium (Small-leaved jointfir).